The chain runs to 375 residues: MVKVLAVLYDGGKHGEEVPELLGTIQNELGLRKWLEDQGHTLVTTCDKDGENSTFDKELEDAEIIITTPFHPGYLTAERLARAKKLKLAVTAGIGSDHVDLNAANKTNGGITVAEVTGSNVVSVAEHVLMTILVLVRNFVPAHEQIQEGRWDVAEAAKNEFDLEGKVVGTVGVGRIGERVLRRLKPFDCKELLYYDYQPLSAEKEAEIGCRRVADLEEMLAQCDVVTINCPLHEKTQGLFNKELISKMKKGSWLVNTARGAIVVKEDVAEALKSGHLRGYGGDVWFPQPAPQDHPLRYAKNPFGGGNAMVPHMSGTSLDAQKRYAAGTKAIIESYLSGKHDYRPEDLIVYGGDYATKSYGERERAKAAAAAAKSA.

Residues Ile94 and Asn120 each coordinate substrate. Residues 175 to 176, Asp196, 231 to 235, Thr257, Asp283, 312 to 315, and Ser358 contribute to the NAD(+) site; these read RI, PLHEK, and HMSG.

The protein belongs to the D-isomer specific 2-hydroxyacid dehydrogenase family. FDH subfamily. As to quaternary structure, homodimer.

It is found in the cytoplasm. It carries out the reaction formate + NAD(+) = CO2 + NADH. In terms of biological role, catalyzes the NAD(+)-dependent oxidation of formate to carbon dioxide. Formate oxidation is the final step in the methanol oxidation pathway in methylotrophic microorganisms. Has a role in the detoxification of exogenous formate in non-methylotrophic organisms. In Neurospora crassa (strain ATCC 24698 / 74-OR23-1A / CBS 708.71 / DSM 1257 / FGSC 987), this protein is Formate dehydrogenase.